A 125-amino-acid polypeptide reads, in one-letter code: Large ribosomal subunit protein bL19 (125 aa).

This sequence belongs to the bacterial ribosomal protein bL19 family.

Its function is as follows. This protein is located at the 30S-50S ribosomal subunit interface and may play a role in the structure and function of the aminoacyl-tRNA binding site. This is Large ribosomal subunit protein bL19 from Ehrlichia chaffeensis (strain ATCC CRL-10679 / Arkansas).